A 188-amino-acid chain; its full sequence is uncharacterized protein (188 aa).

The tract at residues Asn-57 to Arg-80 is disordered.

This sequence belongs to the transposase 25 family.

This is an uncharacterized protein from Sinorhizobium fredii (strain NBRC 101917 / NGR234).